The following is a 110-amino-acid chain: UPF0122 protein BcerKBAB4_3669 (110 aa).

This sequence belongs to the UPF0122 family.

Its function is as follows. Might take part in the signal recognition particle (SRP) pathway. This is inferred from the conservation of its genetic proximity to ftsY/ffh. May be a regulatory protein. This Bacillus mycoides (strain KBAB4) (Bacillus weihenstephanensis) protein is UPF0122 protein BcerKBAB4_3669.